Here is a 640-residue protein sequence, read N- to C-terminus: Calpain-5 (640 aa).

The Calpain catalytic domain maps to 26–343; it reads LFEDPLFPAT…FTDIIKCRLI (318 aa). Residues C81, H252, and N284 contribute to the active site. Residues 344–496 form a domain III region; that stretch reads NTSYLSIHKT…VFTDVPSNCR (153 aa). The C2 domain occupies 499–617; the sequence is RLDEPPRTCW…HTLHLQDRSS (119 aa).

The protein belongs to the peptidase C2 family.

Calcium-regulated non-lysosomal thiol-protease. This chain is Calpain-5 (Capn5), found in Mus musculus (Mouse).